A 559-amino-acid chain; its full sequence is MDSPGYNCFVDKDKMDAAIQDLGPKELSCTELQELKQLARQGYWAQSHALRGKVYQRLIRDIPCRTVTPDASVYSDIVGKIVGKHSSSCLPLPEFVDNTQVPSYCLNARGEGAVRKILLCLANQFPDISFCPALPAVVALLLHYSIDEAECFEKACRILACNDPGRRLIDQSFLAFESSCMTFGDLVNKYCQAAHKLMVAVSEDVLQVYADWQRWLFGELPLCYFARVFDVFLVEGYKVLYRVALAILKFFHKVRAGQPLESDSVKQDIRTFVRDIAKTVSPEKLLEKAFAIRLFSRKEIQLLQMANEKALKQKGITVKQKSVSLSKRQFVHLAVHAENFRSEIVSVREMRDIWSWVPERFALCQPLLLFSSLQHGYSLARFYFQCEGHEPTLLLIKTTQKEVCGAYLSTDWSERNKFGGKLGFFGTGECFVFRLQPEVQRYEWVVIKHPELTKPPPLMAAEPTAPLSHSASSDPADRLSPFLAARHFNLPSKTESMFMAGGSDCLIVGGGGGQALYIDGDLNRGRTSHCDTFNNQPLCSENFLIAAVEAWGFQDPDTQ.

A 1,2-diacyl-sn-glycero-3-phospho-(1D-myo-inositol)-binding positions include Lys36, Arg40, Lys238, Arg242, and 293-297; that span reads RLFSR. In terms of domain architecture, Rab-GAP TBC spans 47–262; that stretch reads SHALRGKVYQ…KVRAGQPLES (216 aa). Residues 343–554 enclose the TLDc domain; the sequence is EIVSVREMRD…IAAVEAWGFQ (212 aa). Phosphoserine is present on residues Ser473 and Ser480.

In terms of assembly, interacts with ARF6. Highest expression in brain.

It localises to the cell membrane. It is found in the cytoplasm. Its subcellular location is the cytoplasmic vesicle membrane. The protein localises to the presynapse. May act as a GTPase-activating protein for Rab family protein(s). Involved in neuronal projections development, probably through a negative modulation of ARF6 function. Involved in the regulation of synaptic vesicle trafficking. This Homo sapiens (Human) protein is TBC1 domain family member 24 (TBC1D24).